A 1214-amino-acid chain; its full sequence is MEHLIFLLIFGGYSPSIAQITSSTTTTTPVPAANRRTIRVGVAAVQSTELDSIGWPMSGGAINLAIQKLRDDGFIAAFDFEINVNYTECDRSLGAAVGMEFMRSKKYDVVIGAPCQDPMEIMATMATYYTTPLLAWGLVTDSKFTDAERYPYLTNIMANSLSLGFSLVKLFEMMDWDRVALLYETSPQDYPLSIINDVETAINEYEDYSVNVVVKQAVPSGDLNDAQYISVLNRIKSRCRIVVAVIQTATPRRKYLRMITEQNMVSDEYVHIWLGLRSIGFGKQSAGLTKCELNCLSSGLTPVWEVLPDDGWNERAKLAATRLLVMDLSTDVPDVNYLNTFTSQCGAQVVNPPVSCETEQCKNASTSPPSAFARSLHDVFYLYGLAITNIYNTNPVNLANGQAINDAMQLTFAGDCSAQFFSKKNILTFLGLTGEVSINANNTRVPKLMLYALNENYDQASFMNLTYSLDGGASVSLGYTNEASLWFWYNGKRPLTIPICGFLGTECPQTFVDQYGALVFSIGGVLALAMLFLITCFFYVLRQRKLERDRIDAEWQIPLVKLQVPPKREKERMSKRSIQSGPSNITDTSKMTFDNTFSNYSIFYLDKEPVLSTAHPASNLDRTDYDTFVKLRKLDHDNINKFVGLSIDGAEYLAVWKMCMRGSLQDIIGQGNFSIDPFFMFCVIRDMAEGLKYLHNSFLHVHANLRSGTVLINESWQAKLTDFGLGNLAEEKKPMKRRQLWMAPEVIRGTLLPHQVEKPADIYSLAIIASEVLTRKEAWNMSERKDTVDEIVYRIKKGGPNSIRPDLDMDGVEINHSLLVLIRDCWSEDPTDRPGADIICNLLKNMMPKKGNLMDHVFNILEDYTTNLEVEVEDRTKELTAEKKKADVLLGRMLPKQVAERLKQGQTVEPEGFDSVTVFFSDVVKFTQLSQKCSPFQVVNLLNDLYSNFDAIIEEHGVYKVESIGDGYLCVSGLPQRNGNAHIKCIVELSLDFMAYCKAFKIPHLPREKVELRVGVNSGPCVAGVVGLSMPRYCLFGDTVNTASRMESNGKPSHIHLSAAAYTLLMKHYPNQYNTASRGDVIIKVGPLLGLFRPFQGKGVMETFWVFERNNQFMGNSSNMAYNPENKKKQKNDDEDVDDESSDGSSRAPNTPPMHDVNANSPPRQRKPGPPSSSPTFSKRSVSPILEEKAREIHNEETEALYRQFRRQETLALM.

An N-terminal signal peptide occupies residues 1–18 (MEHLIFLLIFGGYSPSIA). Over 19–517 (QITSSTTTTT…PQTFVDQYGA (499 aa)) the chain is Extracellular. 4 N-linked (GlcNAc...) asparagine glycosylation sites follow: N85, N363, N441, and N464. A helical transmembrane segment spans residues 518–538 (LVFSIGGVLALAMLFLITCFF). Residues 539-1214 (YVLRQRKLER…FRRQETLALM (676 aa)) lie on the Cytoplasmic side of the membrane. The 288-residue stretch at 572 to 859 (RMSKRSIQSG…KGNLMDHVFN (288 aa)) folds into the Protein kinase domain. In terms of domain architecture, Guanylate cyclase spans 917 to 1047 (TVFFSDVVKF…DTVNTASRME (131 aa)). Residues 1116–1197 (NSSNMAYNPE…EKAREIHNEE (82 aa)) form a disordered region. A compositionally biased stretch (acidic residues) spans 1133–1142 (DDEDVDDESS). The segment covering 1186–1197 (LEEKAREIHNEE) has biased composition (basic and acidic residues).

It belongs to the adenylyl cyclase class-4/guanylyl cyclase family. Expressed asymmetrically in ASE right (ASER) sensory neuron.

The protein localises to the cell membrane. The catalysed reaction is GTP = 3',5'-cyclic GMP + diphosphate. In terms of biological role, guanylate cyclase involved in the production of the second messenger cGMP. In Caenorhabditis briggsae, this protein is Receptor-type guanylate cyclase gcy-19.